Here is a 341-residue protein sequence, read N- to C-terminus: Glyceraldehyde-3-phosphate dehydrogenase 2 (341 aa).

Residues arginine 12 to isoleucine 13, arginine 78, and threonine 120 contribute to the NAD(+) site. D-glyceraldehyde 3-phosphate-binding positions include serine 152 to threonine 154 and threonine 183. Catalysis depends on cysteine 153, which acts as the Nucleophile. Position 184 (asparagine 184) interacts with NAD(+). Residues arginine 198, threonine 211 to glycine 212, and arginine 234 each bind D-glyceraldehyde 3-phosphate. Asparagine 313 serves as a coordination point for NAD(+).

This sequence belongs to the glyceraldehyde-3-phosphate dehydrogenase family. In terms of assembly, homotetramer.

Its subcellular location is the cytoplasm. The enzyme catalyses D-glyceraldehyde 3-phosphate + phosphate + NAD(+) = (2R)-3-phospho-glyceroyl phosphate + NADH + H(+). Its pathway is carbohydrate degradation; glycolysis; pyruvate from D-glyceraldehyde 3-phosphate: step 1/5. In terms of biological role, catalyzes the oxidative phosphorylation of glyceraldehyde 3-phosphate (G3P) to 1,3-bisphosphoglycerate (BPG) using the cofactor NAD. The first reaction step involves the formation of a hemiacetal intermediate between G3P and a cysteine residue, and this hemiacetal intermediate is then oxidized to a thioester, with concomitant reduction of NAD to NADH. The reduced NADH is then exchanged with the second NAD, and the thioester is attacked by a nucleophilic inorganic phosphate to produce BPG. The sequence is that of Glyceraldehyde-3-phosphate dehydrogenase 2 (gapA2) from Staphylococcus epidermidis (strain ATCC 12228 / FDA PCI 1200).